The sequence spans 328 residues: Putative GDP-L-fucose synthase 2 (328 aa).

At Ala2 the chain carries N-acetylalanine. Gly26–Gly32 is an NADP(+) binding site. The active-site Proton donor/acceptor is the Tyr152. NADP(+) is bound by residues Lys156, Pro179–Leu182, and His195. The substrate site is built by Arg203, Trp218, Arg225, and Asp285.

This sequence belongs to the NAD(P)-dependent epimerase/dehydratase family. Fucose synthase subfamily. In terms of assembly, homodimer.

The enzyme catalyses GDP-beta-L-fucose + NADP(+) = GDP-4-dehydro-alpha-D-rhamnose + NADPH + H(+). It participates in nucleotide-sugar biosynthesis; GDP-L-fucose biosynthesis via de novo pathway; GDP-L-fucose from GDP-alpha-D-mannose: step 2/2. Functionally, catalyzes the two-step NADP-dependent conversion of GDP-4-dehydro-6-deoxy-D-mannose to GDP-fucose, involving an epimerase and a reductase reaction. The chain is Putative GDP-L-fucose synthase 2 (GER2) from Arabidopsis thaliana (Mouse-ear cress).